A 200-amino-acid polypeptide reads, in one-letter code: dITP/XTP pyrophosphatase (200 aa).

7 to 12 contributes to the substrate binding site; sequence TSNKHK. Mg(2+)-binding residues include E38 and D73. Catalysis depends on D73, which acts as the Proton acceptor. Residues S74, 154–157, K177, and 182–183 contribute to the substrate site; these read FGYD and HR.

Belongs to the HAM1 NTPase family. Homodimer. It depends on Mg(2+) as a cofactor.

It carries out the reaction XTP + H2O = XMP + diphosphate + H(+). The enzyme catalyses dITP + H2O = dIMP + diphosphate + H(+). It catalyses the reaction ITP + H2O = IMP + diphosphate + H(+). Its function is as follows. Pyrophosphatase that catalyzes the hydrolysis of nucleoside triphosphates to their monophosphate derivatives, with a high preference for the non-canonical purine nucleotides XTP (xanthosine triphosphate), dITP (deoxyinosine triphosphate) and ITP. Seems to function as a house-cleaning enzyme that removes non-canonical purine nucleotides from the nucleotide pool, thus preventing their incorporation into DNA/RNA and avoiding chromosomal lesions. The chain is dITP/XTP pyrophosphatase from Campylobacter jejuni subsp. doylei (strain ATCC BAA-1458 / RM4099 / 269.97).